Here is a 273-residue protein sequence, read N- to C-terminus: 1,4-dihydroxy-2-naphthoyl-CoA synthase (273 aa).

Substrate contacts are provided by residues R34, 73-77, Y85, 117-121, T143, S149, Y246, and K261; these read SGGDQ and YAVGG. 142 to 144 is a binding site for hydrogencarbonate; that stretch reads QTG. Over residues 254–265 the composition is skewed to basic and acidic residues; sequence GRDAFKEKRDPD. Positions 254 to 273 are disordered; that stretch reads GRDAFKEKRDPDFDQFPKFP.

It belongs to the enoyl-CoA hydratase/isomerase family. MenB subfamily. Requires hydrogencarbonate as cofactor.

It carries out the reaction 2-succinylbenzoyl-CoA + H(+) = 1,4-dihydroxy-2-naphthoyl-CoA + H2O. Its pathway is quinol/quinone metabolism; 1,4-dihydroxy-2-naphthoate biosynthesis; 1,4-dihydroxy-2-naphthoate from chorismate: step 6/7. The protein operates within quinol/quinone metabolism; menaquinone biosynthesis. In terms of biological role, converts o-succinylbenzoyl-CoA (OSB-CoA) to 1,4-dihydroxy-2-naphthoyl-CoA (DHNA-CoA). The chain is 1,4-dihydroxy-2-naphthoyl-CoA synthase from Staphylococcus aureus (strain MRSA252).